We begin with the raw amino-acid sequence, 269 residues long: uncharacterized protein (269 aa).

The protein belongs to the methyltransferase superfamily.

This is an uncharacterized protein from Mycobacterium leprae (strain Br4923).